The sequence spans 691 residues: Lectin-domain containing receptor kinase VI.4 (691 aa).

The first 19 residues, 1–19 (MGRAKSMVSLLLVLFLVRA), serve as a signal peptide directing secretion. Residues 20–306 (HVATTETTTE…AKKRGYNGKV (287 aa)) lie on the Extracellular side of the membrane. The segment at 26-273 (TTTEFIFHGF…AHYVMGWSFA (248 aa)) is legume-lectin like. Residues 307 to 327 (IALIVALSTVISIMLVLLFLF) traverse the membrane as a helical segment. The Cytoplasmic portion of the chain corresponds to 328–691 (MMYKKRMQQE…ISSTSLISGR (364 aa)). A Protein kinase domain is found at 363 to 641 (FKENRVVGTG…LNRDEDVPEI (279 aa)). Residues 369-377 (VGTGGFGIV) and lysine 392 contribute to the ATP site. Aspartate 491 acts as the Proton acceptor in catalysis.

It in the C-terminal section; belongs to the protein kinase superfamily. Ser/Thr protein kinase family. This sequence in the N-terminal section; belongs to the leguminous lectin family.

The protein localises to the cell membrane. The catalysed reaction is L-seryl-[protein] + ATP = O-phospho-L-seryl-[protein] + ADP + H(+). The enzyme catalyses L-threonyl-[protein] + ATP = O-phospho-L-threonyl-[protein] + ADP + H(+). Its function is as follows. Involved in negative regulation of abscisic acid response in seed germination. This Arabidopsis thaliana (Mouse-ear cress) protein is Lectin-domain containing receptor kinase VI.4 (LECRK64).